A 237-amino-acid chain; its full sequence is DNA repair protein RecO (237 aa).

This sequence belongs to the RecO family.

Functionally, involved in DNA repair and RecF pathway recombination. The protein is DNA repair protein RecO of Rickettsia felis (strain ATCC VR-1525 / URRWXCal2) (Rickettsia azadi).